Consider the following 313-residue polypeptide: DNA-directed RNA polymerase subunit alpha (313 aa).

An alpha N-terminal domain (alpha-NTD) region spans residues 1–229 (MNSSNLLMEC…NLFKSIGEQK (229 aa)). The segment at 243–313 (IKPIDPYTHI…LKNKLGIVLK (71 aa)) is alpha C-terminal domain (alpha-CTD).

The protein belongs to the RNA polymerase alpha chain family. As to quaternary structure, in plastids the minimal PEP RNA polymerase catalytic core is composed of four subunits: alpha, beta, beta', and beta''. When a (nuclear-encoded) sigma factor is associated with the core the holoenzyme is formed, which can initiate transcription.

The protein localises to the plastid. Its subcellular location is the chloroplast. The catalysed reaction is RNA(n) + a ribonucleoside 5'-triphosphate = RNA(n+1) + diphosphate. In terms of biological role, DNA-dependent RNA polymerase catalyzes the transcription of DNA into RNA using the four ribonucleoside triphosphates as substrates. This Thalassiosira pseudonana (Marine diatom) protein is DNA-directed RNA polymerase subunit alpha.